Consider the following 115-residue polypeptide: Large ribosomal subunit protein bL20c (115 aa).

The protein belongs to the bacterial ribosomal protein bL20 family.

It localises to the plastid. The protein localises to the chloroplast. Binds directly to 23S ribosomal RNA and is necessary for the in vitro assembly process of the 50S ribosomal subunit. It is not involved in the protein synthesizing functions of that subunit. In Cyanidium caldarium (Red alga), this protein is Large ribosomal subunit protein bL20c (rpl20).